Here is a 579-residue protein sequence, read N- to C-terminus: Transcription factor COE2 (579 aa).

The interaction with DNA stretch occupies residues 63–66 (RKSN). A C5-type zinc finger spans residues 149–168 (CRVLLTHEVMCSRCCEKKSC). Interaction with DNA stretches follow at residues 195 to 202 (NCLKTAGN) and 234 to 237 (NNSK). Positions 260–343 (PCIKAISPSE…KGAPGRFIYT (84 aa)) constitute an IPT/TIG domain. Disordered stretches follow at residues 442 to 482 (GVSI…YGSN), 514 to 533 (AIMPSSPPGSSSSSSLLPFS), and 549 to 579 (LRPQGFPHHPSAKTSGGTSFRAMTGLVVPPM). A compositionally biased stretch (polar residues) spans 449-459 (GQTSGQGYTRN). Low complexity-rich tracts occupy residues 460-472 (SSSLSPRGYPSSS) and 521-533 (PGSSSSSSLLPFS).

This sequence belongs to the COE family.

The protein localises to the nucleus. This chain is Transcription factor COE2 (coe2), found in Danio rerio (Zebrafish).